Here is a 242-residue protein sequence, read N- to C-terminus: Segregation and condensation protein A (242 aa).

Belongs to the ScpA family. As to quaternary structure, component of a cohesin-like complex composed of ScpA, ScpB and the Smc homodimer, in which ScpA and ScpB bind to the head domain of Smc. The presence of the three proteins is required for the association of the complex with DNA.

It is found in the cytoplasm. Its function is as follows. Participates in chromosomal partition during cell division. May act via the formation of a condensin-like complex containing Smc and ScpB that pull DNA away from mid-cell into both cell halves. This chain is Segregation and condensation protein A, found in Lactococcus lactis subsp. cremoris (strain MG1363).